The primary structure comprises 779 residues: Endoribonuclease YSH1 (779 aa).

Zn(2+) is bound by residues histidine 68, histidine 70, aspartate 72, histidine 73, histidine 163, and aspartate 184. Histidine 408 acts as the Proton donor in catalysis. Histidine 430 contacts Zn(2+). At serine 517 the chain carries Phosphoserine; by ATM or ATR.

Belongs to the metallo-beta-lactamase superfamily. RNA-metabolizing metallo-beta-lactamase-like family. CPSF2/YSH1 subfamily. As to quaternary structure, component of the cleavage and polyadenylation factor (CPF) complex, which is composed of at least PTI1, SYC1, SSU72, GLC7, MPE1, REF2, PFS2, PTA1, YSH1/BRR5, SWD2, CFT2/YDH1, YTH1, CFT1/YHH1, FIP1 and PAP1. Interacts with FIP1, PFS2, RNA14 and YTH1. Zn(2+) is required as a cofactor.

It is found in the nucleus. Component of the cleavage and polyadenylation factor (CPF) complex, which plays a key role in polyadenylation-dependent pre-mRNA 3'-end formation and cooperates with cleavage factors including the CFIA complex and NAB4/CFIB. Has endonuclease activity. This Saccharomyces cerevisiae (strain ATCC 204508 / S288c) (Baker's yeast) protein is Endoribonuclease YSH1 (YSH1).